Here is a 362-residue protein sequence, read N- to C-terminus: S-adenosylmethionine decarboxylase proenzyme 2 (362 aa).

Catalysis depends on residues E9 and E12. E68 contributes to the substrate binding site. S69 serves as the catalytic Schiff-base intermediate with substrate; via pyruvic acid. The residue at position 69 (S69) is a Pyruvic acid (Ser); by autocatalysis. The active-site Proton donor; for catalytic activity is C83. Active-site proton acceptor; for processing activity residues include S232 and H245. E249 is a binding site for substrate.

This sequence belongs to the eukaryotic AdoMetDC family. Requires pyruvate as cofactor. Is synthesized initially as an inactive proenzyme. Formation of the active enzyme involves a self-maturation process in which the active site pyruvoyl group is generated from an internal serine residue via an autocatalytic post-translational modification. Two non-identical subunits are generated from the proenzyme in this reaction, and the pyruvate is formed at the N-terminus of the alpha chain, which is derived from the carboxyl end of the proenzyme. The post-translation cleavage follows an unusual pathway, termed non-hydrolytic serinolysis, in which the side chain hydroxyl group of the serine supplies its oxygen atom to form the C-terminus of the beta chain, while the remainder of the serine residue undergoes an oxidative deamination to produce ammonia and the pyruvoyl group blocking the N-terminus of the alpha chain.

It carries out the reaction S-adenosyl-L-methionine + H(+) = S-adenosyl 3-(methylsulfanyl)propylamine + CO2. Its pathway is amine and polyamine biosynthesis; S-adenosylmethioninamine biosynthesis; S-adenosylmethioninamine from S-adenosyl-L-methionine: step 1/1. In terms of biological role, essential for biosynthesis of the polyamines spermidine and spermine. Essential for polyamine homeostasis, and normal plant embryogenesis, growth and development. This is S-adenosylmethionine decarboxylase proenzyme 2 from Arabidopsis thaliana (Mouse-ear cress).